Consider the following 116-residue polypeptide: Orphan antitoxin YagB (116 aa).

This sequence belongs to the CbeA/YafW/YfjZ antitoxin family.

In terms of biological role, putative antitoxin component of a type IV toxin-antitoxin (TA) system; its cognate toxin is unknown. The polypeptide is Orphan antitoxin YagB (yagB) (Escherichia coli (strain K12)).